The primary structure comprises 473 residues: Sulfate adenylyltransferase subunit 1 (473 aa).

A tr-type G domain is found at 19–238 (KTLLKFLTCG…IKIKNSISSE (220 aa)). The segment at 28-35 (GSVDDGKS) is G1. 28–35 (GSVDDGKS) is a GTP binding site. The interval 86–90 (GITID) is G2. The segment at 107–110 (DTPG) is G3. GTP-binding positions include 107-111 (DTPGH) and 162-165 (NKMD). The G4 stretch occupies residues 162-165 (NKMD). Residues 200–202 (SAL) form a G5 region.

The protein belongs to the TRAFAC class translation factor GTPase superfamily. Classic translation factor GTPase family. CysN/NodQ subfamily. As to quaternary structure, heterodimer composed of CysD, the smaller subunit, and CysN.

The enzyme catalyses sulfate + ATP + H(+) = adenosine 5'-phosphosulfate + diphosphate. It participates in sulfur metabolism; hydrogen sulfide biosynthesis; sulfite from sulfate: step 1/3. Its function is as follows. With CysD forms the ATP sulfurylase (ATPS) that catalyzes the adenylation of sulfate producing adenosine 5'-phosphosulfate (APS) and diphosphate, the first enzymatic step in sulfur assimilation pathway. APS synthesis involves the formation of a high-energy phosphoric-sulfuric acid anhydride bond driven by GTP hydrolysis by CysN coupled to ATP hydrolysis by CysD. The protein is Sulfate adenylyltransferase subunit 1 of Buchnera aphidicola subsp. Acyrthosiphon pisum (strain 5A).